A 373-amino-acid chain; its full sequence is Enoyl-[acyl-carrier-protein] reductase, mitochondrial (373 aa).

The N-terminal 53 residues, 1–53 (MWVCGALCRTRAPAQLGQRLLPESRRRRPASASFSASAEPSRVRALVYGHHGD), are a transit peptide targeting the mitochondrion. Lysine 61 carries the N6-acetyllysine; alternate modification. Residue lysine 61 is modified to N6-succinyllysine; alternate. Tyrosine 94 (proton donor) is an active-site residue. NADP(+) is bound by residues asparagine 167, 193–196 (NSGV), and 216–218 (RDT). 2 positions are modified to N6-acetyllysine; alternate: lysine 252 and lysine 267. N6-succinyllysine; alternate occurs at positions 252 and 267. NADP(+) contacts are provided by residues 285–288 (YGGM) and 310–312 (FWL). Lysine 316 bears the N6-succinyllysine mark. Position 368 (lysine 368) interacts with NADP(+).

Belongs to the zinc-containing alcohol dehydrogenase family. Quinone oxidoreductase subfamily. In terms of assembly, homodimer.

The protein resides in the mitochondrion. The catalysed reaction is a 2,3-saturated acyl-[ACP] + NADP(+) = a (2E)-enoyl-[ACP] + NADPH + H(+). It catalyses the reaction (2E)-butenoyl-[ACP] + NADPH + H(+) = butanoyl-[ACP] + NADP(+). The enzyme catalyses (2E)-hexenoyl-[ACP] + NADPH + H(+) = hexanoyl-[ACP] + NADP(+). It carries out the reaction (2E)-octenoyl-[ACP] + NADPH + H(+) = octanoyl-[ACP] + NADP(+). The catalysed reaction is (2E)-decenoyl-[ACP] + NADPH + H(+) = decanoyl-[ACP] + NADP(+). It catalyses the reaction (2E)-dodecenoyl-[ACP] + NADPH + H(+) = dodecanoyl-[ACP] + NADP(+). The enzyme catalyses (2E)-tetradecenoyl-[ACP] + NADPH + H(+) = tetradecanoyl-[ACP] + NADP(+). It carries out the reaction (2E)-hexadecenoyl-[ACP] + NADPH + H(+) = hexadecanoyl-[ACP] + NADP(+). Functionally, catalyzes the NADPH-dependent reduction of trans-2-enoyl thioesters in mitochondrial fatty acid synthesis (fatty acid synthesis type II). Fatty acid chain elongation in mitochondria uses acyl carrier protein (ACP) as an acyl group carrier, but the enzyme accepts both ACP and CoA thioesters as substrates in vitro. Displays a preference for medium-chain over short- and long-chain substrates. May provide the octanoyl chain used for lipoic acid biosynthesis, regulating protein lipoylation and mitochondrial respiratory activity particularly in Purkinje cells. Involved in iron homeostasis; affecting Fe-S cluster assembly and ceramide metabolism. Required for proper morphology and bioenergetic functions of mitochondria. Required for maintenance of neurons. The protein is Enoyl-[acyl-carrier-protein] reductase, mitochondrial (MECR) of Bos taurus (Bovine).